The sequence spans 186 residues: Elongation factor P (186 aa).

Belongs to the elongation factor P family.

It localises to the cytoplasm. It functions in the pathway protein biosynthesis; polypeptide chain elongation. Involved in peptide bond synthesis. Stimulates efficient translation and peptide-bond synthesis on native or reconstituted 70S ribosomes in vitro. Probably functions indirectly by altering the affinity of the ribosome for aminoacyl-tRNA, thus increasing their reactivity as acceptors for peptidyl transferase. The chain is Elongation factor P from Shewanella sp. (strain ANA-3).